Here is a 434-residue protein sequence, read N- to C-terminus: Nuclear receptor subfamily 1 group I member 2 (434 aa).

Residues 38-107 (PQICRVCGDK…RLRKCLESGM (70 aa)) constitute a DNA-binding region (nuclear receptor). 2 consecutive NR C4-type zinc fingers follow at residues 41–61 (CRVC…CEGC) and 77–102 (CPFR…LRKC). The short motif at 66–92 (RRAMKRNARLRCPFRKGACEITRKTRR) is the Bipartite nuclear localization signal element. The segment at 108-145 (KKEMIMSDAAVEERRALIKRKKRERIGTQPPGVQGLTE) is hinge. In terms of domain architecture, NR LBD spans 146–433 (EQRMMIRELM…LMQELFGITG (288 aa)). Residues Ser-247, 285-288 (QLRF), and His-407 contribute to the hyperforin site.

It belongs to the nuclear hormone receptor family. NR1 subfamily. In terms of assembly, heterodimer with RXRA. Interacts with NCOA1. Interacts (via domain NR LBD) with CRY1 and CRY2 in a ligand-dependent manner.

It is found in the nucleus. Nuclear receptor that binds and is activated by a variety of endogenous and xenobiotic compounds. Transcription factor that activates the transcription of multiple genes involved in the metabolism and secretion of potentially harmful xenobiotics, endogenous compounds and drugs. Response to specific ligands is species-specific, due to differences in the ligand-binding domain. Activated by naturally occurring steroids, such as pregnenolone and progesterone. Binds to a response element in the promoters of the CYP3A4 and ABCB1/MDR1 genes. The polypeptide is Nuclear receptor subfamily 1 group I member 2 (NR1I2) (Macaca mulatta (Rhesus macaque)).